The following is an 89-amino-acid chain: Pigment-dispersing hormone peptides (89 aa).

An N-terminal signal peptide occupies residues 1-22 (MTAMAVSGKLLTALVLSTYILG). Alanine amide is present on A86.

The protein belongs to the arthropod PDH family.

It is found in the secreted. Functionally, capable of inducing pigment dispersion in the chromatophores of the fiddler crab Uca pugilator. The sequence is that of Pigment-dispersing hormone peptides from Romalea microptera (Eastern lubber grasshopper).